The sequence spans 251 residues: Pyrroloquinoline-quinone synthase (251 aa).

It belongs to the PqqC family.

The enzyme catalyses 6-(2-amino-2-carboxyethyl)-7,8-dioxo-1,2,3,4,7,8-hexahydroquinoline-2,4-dicarboxylate + 3 O2 = pyrroloquinoline quinone + 2 H2O2 + 2 H2O + H(+). Its pathway is cofactor biosynthesis; pyrroloquinoline quinone biosynthesis. Its function is as follows. Ring cyclization and eight-electron oxidation of 3a-(2-amino-2-carboxyethyl)-4,5-dioxo-4,5,6,7,8,9-hexahydroquinoline-7,9-dicarboxylic-acid to PQQ. This Pseudomonas putida (strain GB-1) protein is Pyrroloquinoline-quinone synthase.